The sequence spans 83 residues: Small ribosomal subunit protein eS21 (83 aa).

It belongs to the eukaryotic ribosomal protein eS21 family. Component of the 40S small ribosomal subunit.

Its subcellular location is the cytoplasm. The protein localises to the cytosol. It localises to the rough endoplasmic reticulum. This chain is Small ribosomal subunit protein eS21 (RpS21), found in Ixodes scapularis (Black-legged tick).